Here is a 688-residue protein sequence, read N- to C-terminus: Elongation factor G (688 aa).

Residues 6-280 (KLFRNFGIMA…AVVDFLPSPI (275 aa)) enclose the tr-type G domain. Residues 15-22 (AHIDAGKT), 79-83 (DTPGH), and 133-136 (NKMD) each bind GTP.

Belongs to the TRAFAC class translation factor GTPase superfamily. Classic translation factor GTPase family. EF-G/EF-2 subfamily.

It localises to the cytoplasm. In terms of biological role, catalyzes the GTP-dependent ribosomal translocation step during translation elongation. During this step, the ribosome changes from the pre-translocational (PRE) to the post-translocational (POST) state as the newly formed A-site-bound peptidyl-tRNA and P-site-bound deacylated tRNA move to the P and E sites, respectively. Catalyzes the coordinated movement of the two tRNA molecules, the mRNA and conformational changes in the ribosome. The chain is Elongation factor G from Ureaplasma urealyticum serovar 10 (strain ATCC 33699 / Western).